Here is a 543-residue protein sequence, read N- to C-terminus: Chaperonin GroEL (543 aa).

ATP-binding positions include 30 to 33, lysine 51, 87 to 91, glycine 415, and aspartate 496; these read TLGP and DGTTT.

Belongs to the chaperonin (HSP60) family. As to quaternary structure, forms a cylinder of 14 subunits composed of two heptameric rings stacked back-to-back. Interacts with the co-chaperonin GroES.

The protein localises to the cytoplasm. The catalysed reaction is ATP + H2O + a folded polypeptide = ADP + phosphate + an unfolded polypeptide.. Functionally, together with its co-chaperonin GroES, plays an essential role in assisting protein folding. The GroEL-GroES system forms a nano-cage that allows encapsulation of the non-native substrate proteins and provides a physical environment optimized to promote and accelerate protein folding. The polypeptide is Chaperonin GroEL (Gluconobacter oxydans (strain 621H) (Gluconobacter suboxydans)).